The following is a 267-amino-acid chain: Undecaprenyl-diphosphatase (267 aa).

8 consecutive transmembrane segments (helical) span residues 1–21 (MSEL…FLPI), 39–59 (QGLA…LIYF), 87–107 (WWIL…KSLV), 113–133 (SGYV…WADA), 144–164 (TGLK…IPGT), 189–209 (FLMS…KFIL), 219–239 (LFLG…VFLI), and 244–264 (VGMM…FYIL).

This sequence belongs to the UppP family.

The protein localises to the cell inner membrane. It carries out the reaction di-trans,octa-cis-undecaprenyl diphosphate + H2O = di-trans,octa-cis-undecaprenyl phosphate + phosphate + H(+). Catalyzes the dephosphorylation of undecaprenyl diphosphate (UPP). Confers resistance to bacitracin. This Psychromonas ingrahamii (strain DSM 17664 / CCUG 51855 / 37) protein is Undecaprenyl-diphosphatase.